The chain runs to 171 residues: Photosystem I assembly protein Ycf3 (171 aa).

3 TPR repeats span residues 35–68, 72–105, and 120–153; these read AFTY…EIDP, SYIL…NPSL, and GEQA…APSN.

Belongs to the Ycf3 family.

The protein resides in the plastid. It localises to the chloroplast thylakoid membrane. Its function is as follows. Essential for the assembly of the photosystem I (PSI) complex. May act as a chaperone-like factor to guide the assembly of the PSI subunits. The sequence is that of Photosystem I assembly protein Ycf3 from Angiopteris evecta (Mule's foot fern).